The sequence spans 446 residues: Adenylosuccinate synthetase (446 aa).

Residues 20 to 26 and 48 to 50 each bind GTP; these read GDEGKGK and GHT. Aspartate 21 serves as the catalytic Proton acceptor. Mg(2+) contacts are provided by aspartate 21 and glycine 48. Residues 21 to 24, 46 to 49, threonine 137, arginine 151, glutamine 232, threonine 247, and arginine 319 each bind IMP; these read DEGK and NAGH. The active-site Proton donor is histidine 49. 315–321 is a binding site for substrate; sequence SVTGRPR. GTP-binding positions include arginine 321, 347-349, and 429-431; these read KLD and STG.

The protein belongs to the adenylosuccinate synthetase family. Homodimer. Requires Mg(2+) as cofactor.

It localises to the cytoplasm. It catalyses the reaction IMP + L-aspartate + GTP = N(6)-(1,2-dicarboxyethyl)-AMP + GDP + phosphate + 2 H(+). It participates in purine metabolism; AMP biosynthesis via de novo pathway; AMP from IMP: step 1/2. In terms of biological role, plays an important role in the de novo pathway of purine nucleotide biosynthesis. Catalyzes the first committed step in the biosynthesis of AMP from IMP. In Polynucleobacter necessarius subsp. necessarius (strain STIR1), this protein is Adenylosuccinate synthetase.